A 338-amino-acid chain; its full sequence is Ketol-acid reductoisomerase (NADP(+)) (338 aa).

A KARI N-terminal Rossmann domain is found at 1 to 181 (MKVFYDKDAD…GGGRAGIIET (181 aa)). NADP(+)-binding positions include 24–27 (YGSQ), arginine 47, and serine 52. The active site involves histidine 107. Glycine 133 is an NADP(+) binding site. A KARI C-terminal knotted domain is found at 182–327 (NFREETETDL…GKLRAMMPWI (146 aa)). The Mg(2+) site is built by aspartate 190, glutamate 194, glutamate 226, and glutamate 230. Residue serine 251 coordinates substrate.

This sequence belongs to the ketol-acid reductoisomerase family. The cofactor is Mg(2+).

It catalyses the reaction (2R)-2,3-dihydroxy-3-methylbutanoate + NADP(+) = (2S)-2-acetolactate + NADPH + H(+). It carries out the reaction (2R,3R)-2,3-dihydroxy-3-methylpentanoate + NADP(+) = (S)-2-ethyl-2-hydroxy-3-oxobutanoate + NADPH + H(+). It functions in the pathway amino-acid biosynthesis; L-isoleucine biosynthesis; L-isoleucine from 2-oxobutanoate: step 2/4. It participates in amino-acid biosynthesis; L-valine biosynthesis; L-valine from pyruvate: step 2/4. In terms of biological role, involved in the biosynthesis of branched-chain amino acids (BCAA). Catalyzes an alkyl-migration followed by a ketol-acid reduction of (S)-2-acetolactate (S2AL) to yield (R)-2,3-dihydroxy-isovalerate. In the isomerase reaction, S2AL is rearranged via a Mg-dependent methyl migration to produce 3-hydroxy-3-methyl-2-ketobutyrate (HMKB). In the reductase reaction, this 2-ketoacid undergoes a metal-dependent reduction by NADPH to yield (R)-2,3-dihydroxy-isovalerate. The sequence is that of Ketol-acid reductoisomerase (NADP(+)) from Cupriavidus metallidurans (strain ATCC 43123 / DSM 2839 / NBRC 102507 / CH34) (Ralstonia metallidurans).